Reading from the N-terminus, the 280-residue chain is Phosphatidylglycerol--prolipoprotein diacylglyceryl transferase (280 aa).

A run of 4 helical transmembrane segments spans residues 12 to 32, 52 to 72, 86 to 106, and 115 to 133; these read FGPF…LIGL, LLPL…VAFE, IWEG…TLIL, and FWDV…QSIG. Arginine 134 serves as a coordination point for a 1,2-diacyl-sn-glycero-3-phospho-(1'-sn-glycerol). The next 3 membrane-spanning stretches (helical) occupy residues 173 to 193, 203 to 223, and 246 to 266; these read PTFL…ILLF, LPAG…RVWI, and IAQL…WWLY.

It belongs to the Lgt family.

It localises to the cell inner membrane. It carries out the reaction L-cysteinyl-[prolipoprotein] + a 1,2-diacyl-sn-glycero-3-phospho-(1'-sn-glycerol) = an S-1,2-diacyl-sn-glyceryl-L-cysteinyl-[prolipoprotein] + sn-glycerol 1-phosphate + H(+). It participates in protein modification; lipoprotein biosynthesis (diacylglyceryl transfer). Its function is as follows. Catalyzes the transfer of the diacylglyceryl group from phosphatidylglycerol to the sulfhydryl group of the N-terminal cysteine of a prolipoprotein, the first step in the formation of mature lipoproteins. This chain is Phosphatidylglycerol--prolipoprotein diacylglyceryl transferase, found in Synechococcus sp. (strain CC9902).